Reading from the N-terminus, the 349-residue chain is Sensory histidine kinase/phosphatase NtrB (349 aa).

A PAS domain is found at 5–78; sequence TQPDAGQILN…SLEAGQGFTD (74 aa). Residues 136–349 form the Histidine kinase domain; sequence GLAHEIKNPL…EFSVYLPIRK (214 aa). The residue at position 139 (H139) is a Phosphohistidine; by autocatalysis. K329 contributes to the ATP binding site.

Post-translationally, autophosphorylated.

The protein resides in the cytoplasm. It catalyses the reaction ATP + protein L-histidine = ADP + protein N-phospho-L-histidine.. Member of the two-component regulatory system NtrB/NtrC, which controls expression of the nitrogen-regulated (ntr) genes in response to nitrogen limitation. Under conditions of nitrogen limitation, NtrB autophosphorylates and transfers the phosphoryl group to NtrC. In the presence of nitrogen, acts as a phosphatase that dephosphorylates and inactivates NtrC. The polypeptide is Sensory histidine kinase/phosphatase NtrB (glnL) (Escherichia coli O157:H7).